A 571-amino-acid polypeptide reads, in one-letter code: Urease subunit alpha (571 aa).

The region spanning 131 to 571 (GGIDAHIHFI…LPMAQRYFLF (441 aa)) is the Urease domain. Residues His136, His138, and Lys219 each contribute to the Ni(2+) site. Residue Lys219 is modified to N6-carboxylysine. His221 provides a ligand contact to substrate. Positions 248 and 274 each coordinate Ni(2+). His322 acts as the Proton donor in catalysis. Asp362 is a binding site for Ni(2+).

Belongs to the metallo-dependent hydrolases superfamily. Urease alpha subunit family. In terms of assembly, heterotrimer of UreA (gamma), UreB (beta) and UreC (alpha) subunits. Three heterotrimers associate to form the active enzyme. Ni cation is required as a cofactor. Post-translationally, carboxylation allows a single lysine to coordinate two nickel ions.

It is found in the cytoplasm. The catalysed reaction is urea + 2 H2O + H(+) = hydrogencarbonate + 2 NH4(+). It functions in the pathway nitrogen metabolism; urea degradation; CO(2) and NH(3) from urea (urease route): step 1/1. The chain is Urease subunit alpha from Nostoc punctiforme (strain ATCC 29133 / PCC 73102).